The sequence spans 2294 residues: Reducing polyketide synthase BOA9 (2294 aa).

Positions proline 4 to alanine 409 constitute a Ketosynthase family 3 (KS3) domain. Residues isoleucine 537 to glutamine 853 are malonyl-CoA:ACP transacylase (MAT) domain. The active-site For malonyltransferase activity is the serine 630. Positions histidine 930–threonine 1067 are N-terminal hotdog fold. Positions histidine 930–leucine 1104 are dehydratase (DH) domain. A PKS/mFAS DH domain is found at histidine 930–aspartate 1236. Histidine 962 (proton acceptor; for dehydratase activity) is an active-site residue. Residues glutamine 1078 to aspartate 1236 form a C-terminal hotdog fold region. The Proton donor; for dehydratase activity role is filled by aspartate 1142. Residues glycine 1618 to valine 1908 form an enoyl reductase (ER) domain region. The tract at residues valine 1934–valine 2107 is ketoreductase (KR) domain. Residues leucine 2214–arginine 2292 form the Carrier domain. Serine 2251 carries the O-(pantetheine 4'-phosphoryl)serine modification.

The protein operates within polyketide biosynthesis. In terms of biological role, reducing polyketide synthase; part of the gene cluster B that mediates the biosynthesis of botcinic acid and its botcinin derivatives, acetate-derived polyketides that contribute to virulence when combined with the sesquiterpene botrydial. Botcinic acid and its derivatives have been shown to induce chlorosis and necrosis during host plant infection, but also have antifungal activities. Two polyketide synthases, BOA6 and BOA9, are involved in the biosynthesis of botcinins. BOA6 mediates the formation of the per-methylated tetraketide core by condensation of four units of malonyl-CoA with one unit of acetyl-CoA, which would be methylated in activated methylene groups to yield a bicyclic acid intermediate that could then either be converted to botrylactone derivatives or lose the starter acetate unit through a retro-Claisen type C-C bond cleavage to yield botcinin derivatives. The second polyketide synthase, BOA9, is probably required for the biosynthesis of the tetraketide side chain of botcinins. The methyltransferase (MT) domain within BOA6 is probably responsible for the incorporation of four methyl groups. The trans-enoyl reductase BOA5 might take over the enoyl reductase function of BOA6 that misses an ER domain. The monooxygenases BOA2, BOA3 and BOA4 might be involved in further hydroxylations at C4, C5 and C8, whereas BOA7, close to BOA9, could potentially be involved in the hydroxylation at C4 in the side chain of botcinins. This Botryotinia fuckeliana (strain B05.10) (Noble rot fungus) protein is Reducing polyketide synthase BOA9.